A 538-amino-acid polypeptide reads, in one-letter code: CWF19-like protein 1 (538 aa).

Disordered stretches follow at residues 259-278 and 298-324; these read PDVTENPYRKSGQEASTGKQ and QGRKRSSTGRDSKSSPHPKQPRKPPQP.

This sequence belongs to the CWF19 family.

This Pongo abelii (Sumatran orangutan) protein is CWF19-like protein 1 (CWF19L1).